We begin with the raw amino-acid sequence, 390 residues long: GTPase Obg (390 aa).

Residues 1–159 (MKFVDEAAIL…RDILLELLLL (159 aa)) form the Obg domain. In terms of domain architecture, OBG-type G spans 160-333 (ADVGMLGLPN…LCWDVMKFIN (174 aa)). GTP is bound by residues 166 to 173 (GLPNAGKS), 191 to 195 (FTTLV), 213 to 216 (DIPG), 283 to 286 (NKID), and 314 to 316 (SAV). The Mg(2+) site is built by Ser-173 and Thr-193. Residues 366–384 (AEADDDWDDDWDEEDDEGV) are compositionally biased toward acidic residues. The disordered stretch occupies residues 366 to 390 (AEADDDWDDDWDEEDDEGVEIIYQK).

Belongs to the TRAFAC class OBG-HflX-like GTPase superfamily. OBG GTPase family. Monomer. Mg(2+) is required as a cofactor.

The protein resides in the cytoplasm. In terms of biological role, an essential GTPase which binds GTP, GDP and possibly (p)ppGpp with moderate affinity, with high nucleotide exchange rates and a fairly low GTP hydrolysis rate. Plays a role in control of the cell cycle, stress response, ribosome biogenesis and in those bacteria that undergo differentiation, in morphogenesis control. This is GTPase Obg from Serratia proteamaculans (strain 568).